A 271-amino-acid chain; its full sequence is Glutamate racemase (271 aa).

Residues Asp10–Ser11 and Tyr42–Gly43 each bind substrate. Residue Cys73 is the Proton donor/acceptor of the active site. Residue Asn74–Thr75 coordinates substrate. Residue Cys183 is the Proton donor/acceptor of the active site. Thr184–His185 lines the substrate pocket.

Belongs to the aspartate/glutamate racemases family.

The catalysed reaction is L-glutamate = D-glutamate. It functions in the pathway cell wall biogenesis; peptidoglycan biosynthesis. Functionally, provides the (R)-glutamate required for cell wall biosynthesis. The protein is Glutamate racemase of Streptococcus thermophilus (strain ATCC BAA-250 / LMG 18311).